Here is a 61-residue protein sequence, read N- to C-terminus: Large ribosomal subunit protein bL32 (61 aa).

A compositionally biased stretch (basic residues) spans 1 to 16 (MAVPRRKTSPSRRGMR). A disordered region spans residues 1-61 (MAVPRRKTSP…RQVLKAKSDS (61 aa)). A compositionally biased stretch (basic and acidic residues) spans 27–44 (YAEDKDSGELRRPHHLDL).

It belongs to the bacterial ribosomal protein bL32 family.

The sequence is that of Large ribosomal subunit protein bL32 from Nitrobacter winogradskyi (strain ATCC 25391 / DSM 10237 / CIP 104748 / NCIMB 11846 / Nb-255).